We begin with the raw amino-acid sequence, 77 residues long: uncharacterized protein (77 aa).

This is an uncharacterized protein from Vaccinia virus (strain Copenhagen) (VACV).